The chain runs to 695 residues: uncharacterized protein (695 aa).

Disordered regions lie at residues 1-112 (MSRL…KHKK) and 242-262 (MKKV…NNDH). Residues 32 to 47 (DSSSSSDSPNFFPSSS) are compositionally biased toward low complexity. Basic and acidic residues predominate over residues 96-107 (KTEKEKEKEPIQ). Positions 278 to 492 (KPRTKLLLLG…KIDKEADTNH (215 aa)) constitute a tr-type G domain. GTP contacts are provided by residues 287–294 (GPPKSGKK), 357–361 (IFTTN), and 417–420 (TKMD).

Belongs to the TRAFAC class translation factor GTPase superfamily. Classic translation factor GTPase family.

It is found in the cytoplasm. The protein localises to the nucleus. This is an uncharacterized protein from Schizosaccharomyces pombe (strain 972 / ATCC 24843) (Fission yeast).